We begin with the raw amino-acid sequence, 904 residues long: Polycystin-2 (904 aa).

Residues 1–102 (MSSSRVRPQA…SSSGGVPGNF (102 aa)) are disordered. Over 1 to 155 (MSSSRVRPQA…NSNREMYLKT (155 aa)) the chain is Cytoplasmic. Residues 8–20 (PQAPQSPAASASA) are compositionally biased toward low complexity. Positions 26-38 (EGIEMEKMHHEEV) are enriched in basic and acidic residues. Over residues 86–96 (SVSTTSSSSSG) the composition is skewed to low complexity. A helical membrane pass occupies residues 156 to 177 (VLREMITYILFLLTLCIITYGM). The Extracellular segment spans residues 178–404 (VSTNMYYYTK…TVRLLRYVSS (227 aa)). Residues Asn-235, Asn-241, and Asn-264 are each glycosylated (N-linked (GlcNAc...) asparagine). A disulfide bond links Cys-267 and Cys-280. Asn-298 carries N-linked (GlcNAc...) asparagine glycosylation. A helical membrane pass occupies residues 405–425 (WDYFVGMCEVSFCLFVLYYLV). At 426–441 (EEALEIRLHRLRYFKS) the chain is on the cytoplasmic side. Residues 442–462 (LWNCLDVLIVALSVPAIIMNI) traverse the membrane as a helical segment. The Extracellular segment spans residues 463 to 489 (CRTSAVSHRLHFLLENHSTYPNFEPLA). An N-linked (GlcNAc...) asparagine glycan is attached at Asn-478. The helical transmembrane segment at 490–510 (RLQVHFNNLAAIIVFLSWVKL) threads the bilayer. Topologically, residues 511-534 (FKFINFNKTMNQLSTTMSRCAKDL) are cytoplasmic. The chain crosses the membrane as a helical span at residues 535-556 (MGFAIMFFIVFLAYAQLAYLVF). At 557-568 (GTQVNDFSTFQA) the chain is on the extracellular side. The segment at residues 569 to 583 (CIFTQFRIILGDFDF) is an intramembrane region (pore-forming). Leu-578 lines the Ca(2+) pocket. The Selectivity filter signature appears at 578–580 (LGD). Residues 584–591 (SEIEEADS) are Extracellular-facing. A helical transmembrane segment spans residues 592-612 (VLGPIYFTTFVFFIFMILLNM). The Cytoplasmic portion of the chain corresponds to 613-904 (FLAIINDTYS…DAAASGPAHL (292 aa)). In terms of domain architecture, EF-hand 1 spans 687–722 (HSDAEIEAIFAKYDLDGDQELTEHEHQQMRDDLEKE). Asp-700, Asp-702, Asp-704, Glu-706, and Glu-711 together coordinate Ca(2+). Over residues 708–732 (TEHEHQQMRDDLEKEREDLDLEHSS) the composition is skewed to basic and acidic residues. Disordered regions lie at residues 708–770 (TEHE…SSGG) and 854–904 (ESDD…PAHL). Residues 740–759 (RSFSRSQDDSEEDDDEDSGH) form a linker region. The 19-residue stretch at 768 to 786 (SGGVSYEEFQVLVRRVDRM) folds into the EF-hand 2 domain. Positions 770-809 (GVSYEEFQVLVRRVDRMEHSIGSIVSKIDAVIVKLEAMER) form a coiled coil. Residues 878–890 (LRPRSSRPPSSLS) show a composition bias toward low complexity.

It belongs to the polycystin family. As to quaternary structure, homotetramer. Component of the heterotetrameric polycystin channel complex with pkd1; the tetramer contains one pkd1 chain and three pkd2 chains. Interacts with pkd1l1. Post-translationally, phosphorylated. Phosphorylation is important for protein function; a mutant human construct that lacks the N-terminal phosphorylation sites cannot complement a zebrafish pkd2-deficient mutant. N-glycosylated. The four subunits in a tetramer probably differ in the extent of glycosylation; simultaneous glycosylation of all experimentally validated sites would probably create steric hindrance. In terms of processing, sumoylated by SUMO1; sumoylation regulates PKD2 membrane recycling. Detected along cilia and at the cilium basal body in Kupffer's vesicle at the 10 somite stage. Detected in heart at 48hpf. Detected in muscle and pronephric kidney at 48 hpf. Detected on trunk muscle sarcolemma and sarcomere, on ependymal cell cilia in brain, at the apical cell membrane in epithelial cells in the ear, at the lateral line organ and olfactory placode at 56 hpf. Detected in adult kidney (at protein level).

The protein resides in the basolateral cell membrane. The protein localises to the cell membrane. It is found in the sarcolemma. It localises to the cytoplasm. Its subcellular location is the myofibril. The protein resides in the sarcomere. The protein localises to the sarcoplasmic reticulum membrane. It is found in the apical cell membrane. It localises to the endoplasmic reticulum membrane. Its subcellular location is the cell projection. The protein resides in the cilium. The protein localises to the cytoskeleton. It is found in the cilium basal body. It localises to the cytoplasmic vesicle membrane. It carries out the reaction K(+)(in) = K(+)(out). The enzyme catalyses Na(+)(in) = Na(+)(out). The catalysed reaction is Ca(2+)(in) = Ca(2+)(out). With respect to regulation, channel activity is regulated by phosphorylation. Channel activity is regulated by intracellular Ca(2+). Its function is as follows. Forms a nonselective cation channel. Can function as a homotetrameric ion channel or can form heteromer with PKD1. Displays distinct function depending on its subcellular localization and regulation by its binding partners. In the primary cilium functions as a cation channel, with a preference for monovalent cations over divalent cations that allows K(+), Na(+) and Ca(2+) influx, with low selectivity for Ca(2+). In the endoplasmic reticulum, likely functions as a K(+) channel to facilitate Ca(2+) release. Required for normal oscillation of Ca(2+) levels within cilia; these oscillations of the intraciliary Ca(2+) levels can trigger cytoplasmic Ca(2+) signaling cascades. Required for normal temporal variation of the intracellular Ca(2+) levels in the heart. Plays a role in fluid-flow mechanosensation. Required for normal specification of the body left-right axis during embryogenesis, most likely via its role in ciliary Ca(2+) oscillations in Kupffer's vesicle. The chain is Polycystin-2 from Danio rerio (Zebrafish).